The following is a 220-amino-acid chain: Ribosomal RNA large subunit methyltransferase E (220 aa).

S-adenosyl-L-methionine contacts are provided by Gly-64, Trp-66, Asp-92, Asp-108, and Asp-133. The active-site Proton acceptor is the Lys-173.

The protein belongs to the class I-like SAM-binding methyltransferase superfamily. RNA methyltransferase RlmE family.

Its subcellular location is the cytoplasm. It carries out the reaction uridine(2552) in 23S rRNA + S-adenosyl-L-methionine = 2'-O-methyluridine(2552) in 23S rRNA + S-adenosyl-L-homocysteine + H(+). Functionally, specifically methylates the uridine in position 2552 of 23S rRNA at the 2'-O position of the ribose in the fully assembled 50S ribosomal subunit. This Acidovorax sp. (strain JS42) protein is Ribosomal RNA large subunit methyltransferase E.